A 93-amino-acid chain; its full sequence is Large ribosomal subunit protein uL23 (93 aa).

The protein belongs to the universal ribosomal protein uL23 family. Part of the 50S ribosomal subunit. Contacts protein L29, and trigger factor when it is bound to the ribosome.

Its function is as follows. One of the early assembly proteins it binds 23S rRNA. One of the proteins that surrounds the polypeptide exit tunnel on the outside of the ribosome. Forms the main docking site for trigger factor binding to the ribosome. The chain is Large ribosomal subunit protein uL23 from Opitutus terrae (strain DSM 11246 / JCM 15787 / PB90-1).